Reading from the N-terminus, the 295-residue chain is Acetylglutamate kinase (295 aa).

Substrate-binding positions include 66–67, R88, and N193; that span reads GG.

Belongs to the acetylglutamate kinase family. ArgB subfamily.

It is found in the cytoplasm. It catalyses the reaction N-acetyl-L-glutamate + ATP = N-acetyl-L-glutamyl 5-phosphate + ADP. It participates in amino-acid biosynthesis; L-arginine biosynthesis; N(2)-acetyl-L-ornithine from L-glutamate: step 2/4. Catalyzes the ATP-dependent phosphorylation of N-acetyl-L-glutamate. The protein is Acetylglutamate kinase of Allorhizobium ampelinum (strain ATCC BAA-846 / DSM 112012 / S4) (Agrobacterium vitis (strain S4)).